Consider the following 270-residue polypeptide: Protein MGF 110-1L (270 aa).

Residues 1–26 (MLGLQIFTLLSIPTLLYTYEIEPLER) form the signal peptide. Topologically, residues 27 to 117 (TSTPPEKELG…HERHEADIRK (91 aa)) are extracellular. The A repeat unit spans residues 27-146 (TSTPPEKELG…YIRKRSLQTV (120 aa)). N-linked (GlcNAc...) asparagine; by host glycosylation is present at Asn-75. Residues 118–138 (WQKLLTYGFYLAGCILAVNYI) traverse the membrane as a helical segment. The Cytoplasmic portion of the chain corresponds to 139-145 (RKRSLQT). The helical transmembrane segment at 146–166 (VMYLLVFLVISFLLSQLMLYG) threads the bilayer. The stretch at 147-270 (MYLLVFLVIS…DNLMKKQDIM (124 aa)) is one B repeat. The Extracellular portion of the chain corresponds to 167-270 (ELEDKKHKIG…DNLMKKQDIM (104 aa)).

The protein belongs to the asfivirus MGF 110 family.

It is found in the membrane. Plays a role in virus cell tropism, and may be required for efficient virus replication in macrophages. The chain is Protein MGF 110-1L from Ornithodoros (relapsing fever ticks).